We begin with the raw amino-acid sequence, 117 residues long: PBP1-interacting protein XAC1 (117 aa).

The interval 1 to 60 is disordered; sequence MSKAPSQPAKKWMSARTLAKSEDATNRKSNTAAPASQPSQQPASVMHERPTPPPPAPVQL. Positions 32-44 are enriched in low complexity; that stretch reads AAPASQPSQQPAS.

Forms a complex composed of at least MKT1, PBP1, XAC1 and LSM12. Forms a complex composed of at least MKT1L, PBP1, XAC1 and LSM12.

Its subcellular location is the cytoplasm. Its function is as follows. Involved in post-transcriptional regulation of gene expression. The protein is PBP1-interacting protein XAC1 of Trypanosoma brucei brucei (strain 927/4 GUTat10.1).